A 622-amino-acid polypeptide reads, in one-letter code: WD repeat-containing protein 70 (622 aa).

Over residues 37-55 (TAVERSKKTLEAREKEEQI) the composition is skewed to basic and acidic residues. The disordered stretch occupies residues 37–141 (TAVERSKKTL…DNPVKGIPDS (105 aa)). Residues 67–84 (SSSRQKNTDTSSSSSGSE) show a composition bias toward low complexity. Positions 120–132 (SDDEDEEQHEDDD) are enriched in acidic residues. WD repeat units lie at residues 148–187 (HGTK…ASLQ), 195–236 (CECH…ECVK), 249–289 (GHTA…KHKG), 298–337 (GKRV…HTKF), 344–383 (TPGT…NPLN), 389–434 (ANYF…KVYE), and 437–476 (VTEA…QRGA). Residues 508-533 (REPRQRSTRKQLEKDRLDPVKSHKPE) are compositionally biased toward basic and acidic residues. 2 disordered regions span residues 508–549 (REPR…GTHG) and 602–622 (AEVE…KRKI). Positions 539–549 (PGRGGRVGTHG) are enriched in gly residues. The span at 604–614 (VESDEEETDNE) shows a compositional bias: acidic residues.

Belongs to the WD repeat GAD-1 family.

In Xenopus tropicalis (Western clawed frog), this protein is WD repeat-containing protein 70 (wdr70).